We begin with the raw amino-acid sequence, 475 residues long: MAAGALRGLAVAGGGESSESEDDGWEIGYLDRASQKLKGPLPIEEKNETFKKALTTGDISLVQELLDSGISVDSSFRYGWTPLMYAASVANVELVRVLLDRGANASFDKDKQTILITACSARGLEEQILKCVELLLSRNADPNVACRRLMTPIMYAARDGHPQVVALLVAHGAEVNTQDENGYTALTWAARQGHKNVVLKLLELGANKMLQTKDGKIPSEIAKRNKHLEIFNFLSLTLNPLEGNLQQLTKEETICKLLTTESDKEKDHLFSSYTAFGDLEIFLHGLGLEHMTDLLKEKDITLRHLLTMRKDEFTKNGINDKDQQKILSALKELEVEEIKFGELPEVAKLEISGDEFLNFLLKLNKQCGHLITAVQNIITELPVNSHKIVLEWASPRNFTSVCEELVNNVEDLSEEVCKLKDLIQKLQNERENDPTHIPLMEEVSTWNSRILKRTAIAVCGFGFLLFICKLTVQRK.

The span at 1 to 10 shows a compositional bias: low complexity; it reads MAAGALRGLA. Positions 1-23 are disordered; that stretch reads MAAGALRGLAVAGGGESSESEDD. Phosphoserine occurs at positions 17, 18, and 20. 6 ANK repeats span residues 45–74, 78–107, 110–144, 148–177, 181–210, and 214–243; these read EKNETFKKALTTGDISLVQELLDSGISVDS, YGWTPLMYAASVANVELVRVLLDRGANASF, DKQTILITACSARGLEEQILKCVELLLSRNADPNV, RLMTPIMYAARDGHPQVVALLVAHGAEVNT, NGYTALTWAARQGHKNVVLKLLELGANKML, and DGKIPSEIAKRNKHLEIFNFLSLTLNPLEG. Residues 272-334 form the SAM domain; sequence SYTAFGDLEI…KILSALKELE (63 aa).

In terms of assembly, interacts with DDX4, PIWIL1, RANBP9 and TDRD1.

The protein resides in the cytoplasm. Its function is as follows. Plays a central role during spermatogenesis by repressing transposable elements and preventing their mobilization, which is essential for the germline integrity. Acts via the piRNA metabolic process, which mediates the repression of transposable elements during meiosis by forming complexes composed of piRNAs and Piwi proteins and governs the methylation and subsequent repression of transposons. Its association with pi-bodies suggests a participation in the primary piRNAs metabolic process. Required prior to the pachytene stage to facilitate the production of multiple types of piRNAs, including those associated with repeats involved in the regulation of retrotransposons. May act by mediating protein-protein interactions during germ cell maturation. The sequence is that of Ankyrin repeat, SAM and basic leucine zipper domain-containing protein 1 (ASZ1) from Otolemur garnettii (Small-eared galago).